The following is a 399-amino-acid chain: Acetate kinase (399 aa).

N7 lines the Mg(2+) pocket. K14 lines the ATP pocket. R91 provides a ligand contact to substrate. D148 functions as the Proton donor/acceptor in the catalytic mechanism. ATP-binding positions include 208 to 212 (HLGNG), 283 to 285 (DFR), and 331 to 335 (GLGEN). E384 contributes to the Mg(2+) binding site.

Belongs to the acetokinase family. Homodimer. Mg(2+) serves as cofactor. The cofactor is Mn(2+).

It is found in the cytoplasm. The enzyme catalyses acetate + ATP = acetyl phosphate + ADP. It participates in metabolic intermediate biosynthesis; acetyl-CoA biosynthesis; acetyl-CoA from acetate: step 1/2. Functionally, catalyzes the formation of acetyl phosphate from acetate and ATP. Can also catalyze the reverse reaction. The sequence is that of Acetate kinase from Desulfitobacterium hafniense (strain DSM 10664 / DCB-2).